A 321-amino-acid polypeptide reads, in one-letter code: Ubiquinone biosynthesis O-methyltransferase, mitochondrial (321 aa).

Arg-102, Gly-135, Asp-157, and Leu-210 together coordinate S-adenosyl-L-methionine. The Mg(2+) site is built by Glu-211, Glu-214, and His-215.

Belongs to the class I-like SAM-binding methyltransferase superfamily. UbiG/COQ3 family. Component of a multi-subunit COQ enzyme complex. The cofactor is Mg(2+).

It is found in the mitochondrion inner membrane. The catalysed reaction is a 3,4-dihydroxy-5-(all-trans-polyprenyl)benzoate + S-adenosyl-L-methionine = a 4-hydroxy-3-methoxy-5-(all-trans-polyprenyl)benzoate + S-adenosyl-L-homocysteine + H(+). The enzyme catalyses a 3-demethylubiquinone + S-adenosyl-L-methionine = a ubiquinone + S-adenosyl-L-homocysteine. It catalyses the reaction a 3-demethylubiquinol + S-adenosyl-L-methionine = a ubiquinol + S-adenosyl-L-homocysteine + H(+). Its pathway is cofactor biosynthesis; ubiquinone biosynthesis. In terms of biological role, O-methyltransferase required for two non-consecutive steps during ubiquinone biosynthesis. Catalyzes the 2 O-methylation of 3,4-dihydroxy-5-(all-trans-polyprenyl)benzoic acid into 4-hydroxy-3-methoxy-5-(all-trans-polyprenyl)benzoic acid. Also catalyzes the last step of ubiquinone biosynthesis by mediating methylation of 3-demethylubiquinone into ubiquinone. Also able to mediate the methylation of 3-demethylubiquinol into ubiquinol. In Dictyostelium discoideum (Social amoeba), this protein is Ubiquinone biosynthesis O-methyltransferase, mitochondrial.